The sequence spans 533 residues: NAD(P)H-quinone oxidoreductase chain 4 2 (533 aa).

Helical transmembrane passes span phenylalanine 5–leucine 25, valine 33–tryptophan 53, leucine 86–tryptophan 106, leucine 114–aspartate 134, leucine 135–isoleucine 155, phenylalanine 168–phenylalanine 188, alanine 208–phenylalanine 228, serine 242–isoleucine 262, phenylalanine 276–phenylalanine 296, isoleucine 310–glycine 330, alanine 331–valine 351, alanine 384–leucine 404, valine 416–methionine 436, and threonine 462–alanine 482.

This sequence belongs to the complex I subunit 4 family.

The protein resides in the cellular thylakoid membrane. It carries out the reaction a plastoquinone + NADH + (n+1) H(+)(in) = a plastoquinol + NAD(+) + n H(+)(out). It catalyses the reaction a plastoquinone + NADPH + (n+1) H(+)(in) = a plastoquinol + NADP(+) + n H(+)(out). In terms of biological role, NDH-1 shuttles electrons from NAD(P)H, via FMN and iron-sulfur (Fe-S) centers, to quinones in the respiratory chain. The immediate electron acceptor for the enzyme in this species is believed to be plastoquinone. Couples the redox reaction to proton translocation (for every two electrons transferred, four hydrogen ions are translocated across the cytoplasmic membrane), and thus conserves the redox energy in a proton gradient. This chain is NAD(P)H-quinone oxidoreductase chain 4 2, found in Thermosynechococcus vestitus (strain NIES-2133 / IAM M-273 / BP-1).